The primary structure comprises 78 residues: Esculentin-2PLa (78 aa).

The signal sequence occupies residues 1 to 22; sequence MFTTKKSMLLLFFLGTISLSLC. The propeptide occupies 23–39; the sequence is EEERGADEEEGDGEKLM. The cysteines at positions 72 and 78 are disulfide-linked.

In terms of tissue distribution, expressed by the skin glands.

It localises to the secreted. Functionally, antimicrobial activity against the Gram-negative bacterium E.coli, the Gram-positive bacterium S.aureus and the yeast C.albicans. The chain is Esculentin-2PLa from Lithobates palustris (Pickerel frog).